We begin with the raw amino-acid sequence, 360 residues long: Protein phosphatase 1 regulatory subunit 7 (360 aa).

Residues 1-64 (MAAERGAGQQ…GEEDPEEEHE (64 aa)) are disordered. At Ala2 the chain carries N-acetylalanine. A phosphoserine mark is found at Ser12, Ser24, Ser27, Ser44, and Ser47. Residues 17 to 34 (EVDRRVESEESGDEEGKK) are compositionally biased toward basic and acidic residues. Residues 53–63 (ERGEEDPEEEH) are compositionally biased toward acidic residues. 11 LRR repeats span residues 77–98 (DAED…EVLK), 99–120 (KVKT…EELQ), 121–142 (SLRE…EALT), 143–164 (ELEI…DKVT), 165–186 (QLKK…SNLH), 187–208 (QLQM…DTLT), 209–230 (NLES…DALT), 231–252 (NLTV…QNLV), 253–274 (NLQE…ENNN), 275–296 (KLTM…SHLT), and 297–318 (EPQE…DELK). Ser322 bears the Phosphoserine mark. The region spanning 331 to 360 (NPLQKDPQYRRKVMLALPSVRQIDATFVRF) is the LRRCT domain.

Belongs to the SDS22 family. As to quaternary structure, interacts with PPP1CA, PPP1CB and PPP1CC/PPP1G.

The protein resides in the nucleus. Regulatory subunit of protein phosphatase 1. This is Protein phosphatase 1 regulatory subunit 7 (PPP1R7) from Pongo abelii (Sumatran orangutan).